A 277-amino-acid chain; its full sequence is Cell death abnormality protein 2 (277 aa).

Residues 14 to 112 form the SH2 domain; sequence FYFPGMSRED…EASLLSAYKK (99 aa). An SH3 1 domain is found at 113-173; sequence PIIEVVVGTF…PANYVQVQSG (61 aa). The tract at residues 179–217 is disordered; sequence RISKGTSQSSIGSSGNGAERFSSTSTSSENAEAHPTLPT. Residues 182-206 show a composition bias toward low complexity; it reads KGTSQSSIGSSGNGAERFSSTSTSS. Residues 214–275 form the SH3 2 domain; sequence TLPTTAKVTF…PFTYIRFNTA (62 aa).

This sequence belongs to the CRK family. In terms of assembly, interacts with ced-5 (via C-terminus which contains a candidate SH3-binding, proline-rich region). Forms a ternary complex with ced-5 and ced-12. Interacts (via SH-2 domain) with src-1 (when activated and phosphorylated at 'Tyr-416').

Required for cell migration and engulfment of cell corpses but not for programmed cell death/apoptosis. Also has a role in the migration of the 2 gonadal distal tip cells (DTCs). The protein is Cell death abnormality protein 2 of Caenorhabditis briggsae.